The chain runs to 294 residues: ATP synthase gamma chain (294 aa).

This sequence belongs to the ATPase gamma chain family. In terms of assembly, F-type ATPases have 2 components, CF(1) - the catalytic core - and CF(0) - the membrane proton channel. CF(1) has five subunits: alpha(3), beta(3), gamma(1), delta(1), epsilon(1). CF(0) has three main subunits: a, b and c.

It is found in the cell inner membrane. Functionally, produces ATP from ADP in the presence of a proton gradient across the membrane. The gamma chain is believed to be important in regulating ATPase activity and the flow of protons through the CF(0) complex. The polypeptide is ATP synthase gamma chain (Parvibaculum lavamentivorans (strain DS-1 / DSM 13023 / NCIMB 13966)).